A 336-amino-acid chain; its full sequence is G-protein coupled receptor homolog FPV027 (336 aa).

Over 1 to 31 (MSMNNITSKMNQDSYGYFQLHMSDFTRVSLS) the chain is Extracellular. Asn5 carries an N-linked (GlcNAc...) asparagine; by host glycan. Residues 32–52 (IVFTLVFLVGIIGNAVIIWFI) form a helical membrane-spanning segment. Residues 53–63 (GFKWTKTISTL) lie on the Cytoplasmic side of the membrane. Residues 64–84 (LFINLALADSLFLIFIPVYTV) form a helical membrane-spanning segment. The Extracellular segment spans residues 85-101 (YVLSNFHWYLGEFLCRV). The cysteines at positions 99 and 178 are disulfide-linked. A helical transmembrane segment spans residues 102 to 122 (SSFFFTTNMYASMFLLTFISI). Over 123–143 (DKYLTLTSHRLVYKYRKYRNY) the chain is Cytoplasmic. A helical membrane pass occupies residues 144 to 164 (YVCIGAIWCISIALGVPTLYY). The Extracellular segment spans residues 165 to 200 (KRVILSSSRNETRCISYYGDDKHTAITIYRIIVCIR). Asn174 is a glycosylation site (N-linked (GlcNAc...) asparagine; by host). A helical membrane pass occupies residues 201-221 (FIIGYVFPMTVILLSYALIVY). Topologically, residues 222 to 240 (KVKFINKPPNRSFMITTAS) are cytoplasmic. The chain crosses the membrane as a helical span at residues 241–261 (IFVFLACWTPHHVLNIISLYG). The Extracellular segment spans residues 262–276 (LKSTSMYNYIKESIP). The helical transmembrane segment at 277–297 (FVNAIAFVYSAINPIIYIFVI) threads the bilayer. Topologically, residues 298–336 (RLTSTYDSDTMDELRSALLDEETTSTEDCSDIEISDISR) are cytoplasmic.

Belongs to the G-protein coupled receptor 1 family.

Its subcellular location is the host cell membrane. The polypeptide is G-protein coupled receptor homolog FPV027 (Vertebrata (FPV)).